A 547-amino-acid chain; its full sequence is Delta-guaiene synthase 1 (547 aa).

The Mg(2+) site is built by D299, D303, and D444. Positions 299-303 (DDTYD) match the DDXXD motif motif.

This sequence belongs to the terpene synthase family. The cofactor is Mg(2+).

The enzyme catalyses (2E,6E)-farnesyl diphosphate = delta-guaiene + diphosphate. It carries out the reaction (2E,6E)-farnesyl diphosphate = alpha-guaiene + diphosphate. It participates in secondary metabolite biosynthesis; terpenoid biosynthesis. In terms of biological role, sesquiterpene synthase involved in the biosynthesis of delta-guaiene (81.2%) and alpha-guaiene (18.1%), two structures composed of five- and seven-membered rings. Also produces 0.7% of alpha-humulene. This Aquilaria crassna (Eagle wood) protein is Delta-guaiene synthase 1 (C2).